The primary structure comprises 304 residues: Lipoyl synthase (304 aa).

A disordered region spans residues 1 to 21; sequence MAPELIQIDLEPRKPAPKPSW. Positions 48, 53, 59, 74, 78, 81, and 287 each coordinate [4Fe-4S] cluster. A Radical SAM core domain is found at 60–276; it reads WNHKTATFML…KEEAMKMGFR (217 aa).

This sequence belongs to the radical SAM superfamily. Lipoyl synthase family. [4Fe-4S] cluster serves as cofactor.

It is found in the cytoplasm. The catalysed reaction is [[Fe-S] cluster scaffold protein carrying a second [4Fe-4S](2+) cluster] + N(6)-octanoyl-L-lysyl-[protein] + 2 oxidized [2Fe-2S]-[ferredoxin] + 2 S-adenosyl-L-methionine + 4 H(+) = [[Fe-S] cluster scaffold protein] + N(6)-[(R)-dihydrolipoyl]-L-lysyl-[protein] + 4 Fe(3+) + 2 hydrogen sulfide + 2 5'-deoxyadenosine + 2 L-methionine + 2 reduced [2Fe-2S]-[ferredoxin]. The protein operates within protein modification; protein lipoylation via endogenous pathway; protein N(6)-(lipoyl)lysine from octanoyl-[acyl-carrier-protein]: step 2/2. Functionally, catalyzes the radical-mediated insertion of two sulfur atoms into the C-6 and C-8 positions of the octanoyl moiety bound to the lipoyl domains of lipoate-dependent enzymes, thereby converting the octanoylated domains into lipoylated derivatives. This chain is Lipoyl synthase, found in Koribacter versatilis (strain Ellin345).